The following is a 358-amino-acid chain: Putative hydrogenase expression/formation protein MJ0993 (358 aa).

3 residues coordinate Fe cation: Cys33, Cys61, and Cys64.

It belongs to the HypD family.

This is Putative hydrogenase expression/formation protein MJ0993 from Methanocaldococcus jannaschii (strain ATCC 43067 / DSM 2661 / JAL-1 / JCM 10045 / NBRC 100440) (Methanococcus jannaschii).